Consider the following 459-residue polypeptide: Putrescine aminotransferase (459 aa).

Residues 150-151 (GT) and Q274 contribute to the pyridoxal 5'-phosphate site. K300 is modified (N6-(pyridoxal phosphate)lysine). T332 lines the pyridoxal 5'-phosphate pocket.

Belongs to the class-III pyridoxal-phosphate-dependent aminotransferase family. Putrescine aminotransferase subfamily. Requires pyridoxal 5'-phosphate as cofactor.

The catalysed reaction is an alkane-alpha,omega-diamine + 2-oxoglutarate = an omega-aminoaldehyde + L-glutamate. It catalyses the reaction putrescine + 2-oxoglutarate = 1-pyrroline + L-glutamate + H2O. It carries out the reaction cadaverine + 2-oxoglutarate = 5-aminopentanal + L-glutamate. The protein operates within amine and polyamine degradation; putrescine degradation; 4-aminobutanal from putrescine (transaminase route): step 1/1. Functionally, catalyzes the aminotransferase reaction from putrescine to 2-oxoglutarate, leading to glutamate and 4-aminobutanal, which spontaneously cyclizes to form 1-pyrroline. This is the first step in one of two pathways for putrescine degradation, where putrescine is converted into 4-aminobutanoate (gamma-aminobutyrate or GABA) via 4-aminobutanal. Also functions as a cadaverine transaminase in a a L-lysine degradation pathway to succinate that proceeds via cadaverine, glutarate and L-2-hydroxyglutarate. In Escherichia coli O17:K52:H18 (strain UMN026 / ExPEC), this protein is Putrescine aminotransferase.